The sequence spans 557 residues: Dihydroxy-acid dehydratase (557 aa).

Cys50 lines the [2Fe-2S] cluster pocket. Asp82 contributes to the Mg(2+) binding site. Residue Cys123 participates in [2Fe-2S] cluster binding. Mg(2+)-binding residues include Asp124 and Lys125. An N6-carboxylysine modification is found at Lys125. Residue Cys195 participates in [2Fe-2S] cluster binding. A Mg(2+)-binding site is contributed by Glu447. The active-site Proton acceptor is the Ser473.

Belongs to the IlvD/Edd family. As to quaternary structure, homodimer. It depends on [2Fe-2S] cluster as a cofactor. Requires Mg(2+) as cofactor.

The catalysed reaction is (2R)-2,3-dihydroxy-3-methylbutanoate = 3-methyl-2-oxobutanoate + H2O. It carries out the reaction (2R,3R)-2,3-dihydroxy-3-methylpentanoate = (S)-3-methyl-2-oxopentanoate + H2O. The protein operates within amino-acid biosynthesis; L-isoleucine biosynthesis; L-isoleucine from 2-oxobutanoate: step 3/4. It functions in the pathway amino-acid biosynthesis; L-valine biosynthesis; L-valine from pyruvate: step 3/4. Functionally, functions in the biosynthesis of branched-chain amino acids. Catalyzes the dehydration of (2R,3R)-2,3-dihydroxy-3-methylpentanoate (2,3-dihydroxy-3-methylvalerate) into 2-oxo-3-methylpentanoate (2-oxo-3-methylvalerate) and of (2R)-2,3-dihydroxy-3-methylbutanoate (2,3-dihydroxyisovalerate) into 2-oxo-3-methylbutanoate (2-oxoisovalerate), the penultimate precursor to L-isoleucine and L-valine, respectively. This chain is Dihydroxy-acid dehydratase, found in Burkholderia pseudomallei (strain 1710b).